The primary structure comprises 79 residues: Hemoglobin subunit zeta (79 aa).

Serine 1 carries the N-acetylserine modification. The region spanning serine 1–valine 79 is the Globin domain. 2 positions are modified to phosphoserine: serine 38 and serine 53. Histidine 59 is a binding site for heme b.

Belongs to the globin family. In terms of assembly, heterotetramer of two zeta chains and two epsilon chains.

In terms of biological role, the zeta chain is an alpha-type chain of mammalian embryonic hemoglobin. The chain is Hemoglobin subunit zeta from Notamacropus eugenii (Tammar wallaby).